Consider the following 622-residue polypeptide: DNA-directed RNA polymerase subunit gamma (622 aa).

The Zn(2+) site is built by Cys70, Cys72, Cys85, and Cys88. Residues Asp466, Asp468, and Asp470 each contribute to the Mg(2+) site.

Belongs to the RNA polymerase beta' chain family. RpoC1 subfamily. As to quaternary structure, in cyanobacteria the RNAP catalytic core is composed of 2 alpha, 1 beta, 1 beta', 1 gamma and 1 omega subunit. When a sigma factor is associated with the core the holoenzyme is formed, which can initiate transcription. It depends on Mg(2+) as a cofactor. Zn(2+) is required as a cofactor.

The catalysed reaction is RNA(n) + a ribonucleoside 5'-triphosphate = RNA(n+1) + diphosphate. In terms of biological role, DNA-dependent RNA polymerase catalyzes the transcription of DNA into RNA using the four ribonucleoside triphosphates as substrates. The sequence is that of DNA-directed RNA polymerase subunit gamma from Cyanothece sp. (strain PCC 7425 / ATCC 29141).